The primary structure comprises 158 residues: Ribosome maturation factor RimP (158 aa).

The protein belongs to the RimP family.

It localises to the cytoplasm. Its function is as follows. Required for maturation of 30S ribosomal subunits. This chain is Ribosome maturation factor RimP, found in Lactobacillus acidophilus (strain ATCC 700396 / NCK56 / N2 / NCFM).